The primary structure comprises 280 residues: Bifunctional protein FolD (280 aa).

NADP(+) contacts are provided by residues 159–161 (GRS), Ser184, and Ile225.

The protein belongs to the tetrahydrofolate dehydrogenase/cyclohydrolase family. As to quaternary structure, homodimer.

It catalyses the reaction (6R)-5,10-methylene-5,6,7,8-tetrahydrofolate + NADP(+) = (6R)-5,10-methenyltetrahydrofolate + NADPH. It carries out the reaction (6R)-5,10-methenyltetrahydrofolate + H2O = (6R)-10-formyltetrahydrofolate + H(+). It participates in one-carbon metabolism; tetrahydrofolate interconversion. Functionally, catalyzes the oxidation of 5,10-methylenetetrahydrofolate to 5,10-methenyltetrahydrofolate and then the hydrolysis of 5,10-methenyltetrahydrofolate to 10-formyltetrahydrofolate. The chain is Bifunctional protein FolD from Methanosphaerula palustris (strain ATCC BAA-1556 / DSM 19958 / E1-9c).